The primary structure comprises 307 residues: Protoheme IX farnesyltransferase (307 aa).

9 helical membrane-spanning segments follow: residues 28–48 (VTQLAVFCAVIGMFLATPGMV), 50–70 (WPVLIGGAVGIWLFAGAAFAI), 100–120 (ILLFSLVLGGAGMWTLHVFAN), 122–142 (LTMWLTFATFIGYAIIYTLLL), 149–169 (NIVIGGLSGAMPPALGWAAVA), 176–196 (AWILVLIIFTWTPPHFWALAL), 218–238 (FTLLHILLYTLIMVAATILPF), 243–263 (SGYLYLAVALVLGFGFLVHAW), and 282–302 (IVYLSLLFAALLIDHYFKFGP).

The protein belongs to the UbiA prenyltransferase family. Protoheme IX farnesyltransferase subfamily.

It is found in the cell inner membrane. The enzyme catalyses heme b + (2E,6E)-farnesyl diphosphate + H2O = Fe(II)-heme o + diphosphate. It functions in the pathway porphyrin-containing compound metabolism; heme O biosynthesis; heme O from protoheme: step 1/1. Converts heme B (protoheme IX) to heme O by substitution of the vinyl group on carbon 2 of heme B porphyrin ring with a hydroxyethyl farnesyl side group. The sequence is that of Protoheme IX farnesyltransferase from Ralstonia nicotianae (strain ATCC BAA-1114 / GMI1000) (Ralstonia solanacearum).